Consider the following 538-residue polypeptide: Putative cysteine ligase BshC (538 aa).

Residues 462–533 (LDHLEKRLLK…DPLESNFKIL (72 aa)) adopt a coiled-coil conformation.

Belongs to the BshC family.

This Christiangramia forsetii (strain DSM 17595 / CGMCC 1.15422 / KT0803) (Gramella forsetii) protein is Putative cysteine ligase BshC.